The sequence spans 133 residues: Alpha-amylase inhibitor/endochitinase (133 aa).

Glu-30 functions as the Proton donor in the catalytic mechanism.

Belongs to the glycosyl hydrolase 19 family. Chitinase class I subfamily.

The enzyme catalyses Random endo-hydrolysis of N-acetyl-beta-D-glucosaminide (1-&gt;4)-beta-linkages in chitin and chitodextrins.. In terms of biological role, this protein functions both as an alpha-amylase inhibitor and as a chitinase. The protein is Alpha-amylase inhibitor/endochitinase of Coix lacryma-jobi (Job's tears).